A 187-amino-acid chain; its full sequence is Accessory gene regulator protein B (187 aa).

The next 5 helical transmembrane spans lie at 49–69 (LAYI…FYLI), 82–102 (FWCY…VLHF), 107–127 (TLMM…APAA), 143–163 (YFSI…KEPY), and 164–184 (TQFI…IYYS).

The protein belongs to the AgrB family.

It localises to the cell membrane. In terms of biological role, essential for the production of a quorum sensing system signal molecule, the autoinducing peptide (AIP). This quorum sensing system is responsible for the regulation of the expression of virulence factor genes. Involved in the proteolytic processing of AgrD, the precursor of AIP. The sequence is that of Accessory gene regulator protein B from Staphylococcus aureus (strain MRSA252).